A 187-amino-acid polypeptide reads, in one-letter code: Putative manganese efflux pump MntP (187 aa).

6 helical membrane-spanning segments follow: residues 3–23 (FYSLIFLSCALGMDAFAVSLC), 35–55 (HYLIVGIYFGGFQALMPTIGY), 56–76 (FIGITFASFIASIDHWIAFIL), 107–127 (LALAIATSIDALAVGVSFAFL), 129–149 (VNLLLAIFLIGIITFILCIIA), and 166–186 (LLGGLVLIILGVKILIEHLFF).

The protein belongs to the MntP (TC 9.B.29) family.

It localises to the cell inner membrane. Its function is as follows. Probably functions as a manganese efflux pump. This chain is Putative manganese efflux pump MntP, found in Campylobacter jejuni (strain RM1221).